A 389-amino-acid polypeptide reads, in one-letter code: Chaperone protein DnaJ (389 aa).

The J domain maps to 6–70 (DYYEILGLSK…EKRAQYDRFG (65 aa)). A CR-type zinc finger spans residues 131–213 (GVRKDIDIPR…CSGAGRVRSR (83 aa)). Cysteine 144, cysteine 147, cysteine 161, cysteine 164, cysteine 187, cysteine 190, cysteine 201, and cysteine 204 together coordinate Zn(2+). CXXCXGXG motif repeat units follow at residues 144–151 (CSTCSGTG), 161–168 (CPNCGGTG), 187–194 (CSACHGRG), and 201–208 (CPTCSGAG). The tract at residues 145–167 (STCSGTGAKPGTSPKRCPNCGGT) is disordered. The interval 351 to 389 (LSNGKKPEAEERSRSDKQKSEKPRKSKGLFEKVKDAFES) is disordered. Basic and acidic residues predominate over residues 355–389 (KKPEAEERSRSDKQKSEKPRKSKGLFEKVKDAFES).

Belongs to the DnaJ family. In terms of assembly, homodimer. It depends on Zn(2+) as a cofactor.

It localises to the cytoplasm. In terms of biological role, participates actively in the response to hyperosmotic and heat shock by preventing the aggregation of stress-denatured proteins and by disaggregating proteins, also in an autonomous, DnaK-independent fashion. Unfolded proteins bind initially to DnaJ; upon interaction with the DnaJ-bound protein, DnaK hydrolyzes its bound ATP, resulting in the formation of a stable complex. GrpE releases ADP from DnaK; ATP binding to DnaK triggers the release of the substrate protein, thus completing the reaction cycle. Several rounds of ATP-dependent interactions between DnaJ, DnaK and GrpE are required for fully efficient folding. Also involved, together with DnaK and GrpE, in the DNA replication of plasmids through activation of initiation proteins. The chain is Chaperone protein DnaJ from Methanosarcina mazei (strain ATCC BAA-159 / DSM 3647 / Goe1 / Go1 / JCM 11833 / OCM 88) (Methanosarcina frisia).